The sequence spans 310 residues: p-hydroxybenzoic acid efflux pump subunit AaeA (310 aa).

The helical transmembrane segment at 12-32 (AITVVLVILAFIAIFNAWVYY) threads the bilayer.

It belongs to the membrane fusion protein (MFP) (TC 8.A.1) family.

It is found in the cell inner membrane. In terms of biological role, forms an efflux pump with AaeB. In Escherichia coli O9:H4 (strain HS), this protein is p-hydroxybenzoic acid efflux pump subunit AaeA.